The primary structure comprises 352 residues: Quinolinate synthase (352 aa).

Iminosuccinate contacts are provided by His-48 and Ser-69. Position 114 (Cys-114) interacts with [4Fe-4S] cluster. Iminosuccinate-binding positions include Tyr-140–Asn-142 and Ser-157. Cys-201 contributes to the [4Fe-4S] cluster binding site. Residues His-227 to Glu-229 and Thr-244 contribute to the iminosuccinate site. Cys-298 contributes to the [4Fe-4S] cluster binding site.

This sequence belongs to the quinolinate synthase family. Type 1 subfamily. It depends on [4Fe-4S] cluster as a cofactor.

It localises to the cytoplasm. The enzyme catalyses iminosuccinate + dihydroxyacetone phosphate = quinolinate + phosphate + 2 H2O + H(+). It participates in cofactor biosynthesis; NAD(+) biosynthesis; quinolinate from iminoaspartate: step 1/1. Its function is as follows. Catalyzes the condensation of iminoaspartate with dihydroxyacetone phosphate to form quinolinate. The protein is Quinolinate synthase of Pseudomonas aeruginosa (strain UCBPP-PA14).